The chain runs to 458 residues: ATP synthase subunit beta (458 aa).

148–155 (GGAGVGKT) contacts ATP.

The protein belongs to the ATPase alpha/beta chains family. As to quaternary structure, F-type ATPases have 2 components, CF(1) - the catalytic core - and CF(0) - the membrane proton channel. CF(1) has five subunits: alpha(3), beta(3), gamma(1), delta(1), epsilon(1). CF(0) has three main subunits: a(1), b(2) and c(9-12). The alpha and beta chains form an alternating ring which encloses part of the gamma chain. CF(1) is attached to CF(0) by a central stalk formed by the gamma and epsilon chains, while a peripheral stalk is formed by the delta and b chains.

Its subcellular location is the cell inner membrane. It catalyses the reaction ATP + H2O + 4 H(+)(in) = ADP + phosphate + 5 H(+)(out). Functionally, produces ATP from ADP in the presence of a proton gradient across the membrane. The catalytic sites are hosted primarily by the beta subunits. The sequence is that of ATP synthase subunit beta from Pseudomonas putida (strain GB-1).